The chain runs to 342 residues: Ketol-acid reductoisomerase (NADP(+)) (342 aa).

In terms of domain architecture, KARI N-terminal Rossmann spans valine 2–threonine 181. NADP(+) is bound by residues tyrosine 25–glutamine 28, arginine 48, serine 52, and aspartate 82–glutamine 85. Histidine 107 is an active-site residue. Residue glycine 133 participates in NADP(+) binding. The KARI C-terminal knotted domain maps to threonine 182–valine 327. Mg(2+) contacts are provided by aspartate 190, glutamate 194, glutamate 226, and glutamate 230. Substrate is bound at residue serine 251.

This sequence belongs to the ketol-acid reductoisomerase family. The cofactor is Mg(2+).

The catalysed reaction is (2R)-2,3-dihydroxy-3-methylbutanoate + NADP(+) = (2S)-2-acetolactate + NADPH + H(+). It catalyses the reaction (2R,3R)-2,3-dihydroxy-3-methylpentanoate + NADP(+) = (S)-2-ethyl-2-hydroxy-3-oxobutanoate + NADPH + H(+). It functions in the pathway amino-acid biosynthesis; L-isoleucine biosynthesis; L-isoleucine from 2-oxobutanoate: step 2/4. Its pathway is amino-acid biosynthesis; L-valine biosynthesis; L-valine from pyruvate: step 2/4. Its function is as follows. Involved in the biosynthesis of branched-chain amino acids (BCAA). Catalyzes an alkyl-migration followed by a ketol-acid reduction of (S)-2-acetolactate (S2AL) to yield (R)-2,3-dihydroxy-isovalerate. In the isomerase reaction, S2AL is rearranged via a Mg-dependent methyl migration to produce 3-hydroxy-3-methyl-2-ketobutyrate (HMKB). In the reductase reaction, this 2-ketoacid undergoes a metal-dependent reduction by NADPH to yield (R)-2,3-dihydroxy-isovalerate. The sequence is that of Ketol-acid reductoisomerase (NADP(+)) from Bacillus subtilis (strain 168).